Reading from the N-terminus, the 130-residue chain is uncharacterized protein (130 aa).

This is an uncharacterized protein from Treponema pallidum (strain Nichols).